A 538-amino-acid polypeptide reads, in one-letter code: Putative cysteine ligase BshC (538 aa).

A coiled-coil region spans residues 460 to 484 (KINEQIELLERMLKRNVEKKHEVEL).

It belongs to the BshC family.

Functionally, involved in bacillithiol (BSH) biosynthesis. May catalyze the last step of the pathway, the addition of cysteine to glucosamine malate (GlcN-Mal) to generate BSH. This Bacillus cereus (strain AH820) protein is Putative cysteine ligase BshC.